The chain runs to 239 residues: Small ribosomal subunit protein uS3 (239 aa).

Positions 39-107 (VRQVLRKKMS…SVHINVIEVR (69 aa)) constitute a KH type-2 domain. The segment at 214–239 (GQEKQDDGSRGDRNADRSSRRSREVR) is disordered. Residues 216 to 239 (EKQDDGSRGDRNADRSSRRSREVR) are compositionally biased toward basic and acidic residues.

Belongs to the universal ribosomal protein uS3 family. Part of the 30S ribosomal subunit. Forms a tight complex with proteins S10 and S14.

In terms of biological role, binds the lower part of the 30S subunit head. Binds mRNA in the 70S ribosome, positioning it for translation. This is Small ribosomal subunit protein uS3 from Xylella fastidiosa (strain M12).